The chain runs to 179 residues: Large ribosomal subunit protein uL16 (179 aa).

A disordered region spans residues Lys147–Ser179. Residues Leu156–Thr168 are compositionally biased toward acidic residues. Residues Ser169 to Ser179 are compositionally biased toward polar residues.

The protein belongs to the universal ribosomal protein uL16 family. In terms of assembly, part of the 50S ribosomal subunit.

Binds 23S rRNA and is also seen to make contacts with the A and possibly P site tRNAs. The polypeptide is Large ribosomal subunit protein uL16 (Prochlorococcus marinus (strain MIT 9211)).